The following is a 193-amino-acid chain: Holliday junction branch migration complex subunit RuvA (193 aa).

A domain I region spans residues 1–63; the sequence is MYAYLKGKIM…EDAQLLYGFK (63 aa). The interval 64-141 is domain II; sequence DEEEKAMFNA…TITDESELFK (78 aa). A flexible linker region spans residues 141 to 142; it reads KE. The domain III stretch occupies residues 143–193; that stretch reads VNDTLLNEALLAFEALGYSKREITKIEKELKKKQFSTVDEYVKQGLQMFVS.

It belongs to the RuvA family. As to quaternary structure, homotetramer. Forms an RuvA(8)-RuvB(12)-Holliday junction (HJ) complex. HJ DNA is sandwiched between 2 RuvA tetramers; dsDNA enters through RuvA and exits via RuvB. An RuvB hexamer assembles on each DNA strand where it exits the tetramer. Each RuvB hexamer is contacted by two RuvA subunits (via domain III) on 2 adjacent RuvB subunits; this complex drives branch migration. In the full resolvosome a probable DNA-RuvA(4)-RuvB(12)-RuvC(2) complex forms which resolves the HJ.

The protein localises to the cytoplasm. In terms of biological role, the RuvA-RuvB-RuvC complex processes Holliday junction (HJ) DNA during genetic recombination and DNA repair, while the RuvA-RuvB complex plays an important role in the rescue of blocked DNA replication forks via replication fork reversal (RFR). RuvA specifically binds to HJ cruciform DNA, conferring on it an open structure. The RuvB hexamer acts as an ATP-dependent pump, pulling dsDNA into and through the RuvAB complex. HJ branch migration allows RuvC to scan DNA until it finds its consensus sequence, where it cleaves and resolves the cruciform DNA. The chain is Holliday junction branch migration complex subunit RuvA from Macrococcus caseolyticus (strain JCSC5402) (Macrococcoides caseolyticum).